Here is a 176-residue protein sequence, read N- to C-terminus: MNSEFVEVAIIGRCVGLKGCVKLHNKGDFPEQFKKNAVFFDKDGNEFIIKSYDVSKETALFEGYEDIDLAKSLVNKILYTTKELTRKNCKLKEGEFFYFDVLGLNIVENGEILGVVKDIEDNLNNALLYVKTSDDLVSIGFAKNFYVPYIDRFVISVSLENKEILTKDAKSILENS.

The PRC barrel domain maps to 93–172; sequence EGEFFYFDVL…EILTKDAKSI (80 aa).

The protein belongs to the RimM family. As to quaternary structure, binds ribosomal protein uS19.

It localises to the cytoplasm. Functionally, an accessory protein needed during the final step in the assembly of 30S ribosomal subunit, possibly for assembly of the head region. Essential for efficient processing of 16S rRNA. May be needed both before and after RbfA during the maturation of 16S rRNA. It has affinity for free ribosomal 30S subunits but not for 70S ribosomes. The chain is Ribosome maturation factor RimM from Campylobacter curvus (strain 525.92).